The following is a 367-amino-acid chain: Histidinol-phosphate aminotransferase (367 aa).

Lys227 bears the N6-(pyridoxal phosphate)lysine mark.

It belongs to the class-II pyridoxal-phosphate-dependent aminotransferase family. Histidinol-phosphate aminotransferase subfamily. As to quaternary structure, homodimer. It depends on pyridoxal 5'-phosphate as a cofactor.

The enzyme catalyses L-histidinol phosphate + 2-oxoglutarate = 3-(imidazol-4-yl)-2-oxopropyl phosphate + L-glutamate. It functions in the pathway amino-acid biosynthesis; L-histidine biosynthesis; L-histidine from 5-phospho-alpha-D-ribose 1-diphosphate: step 7/9. This is Histidinol-phosphate aminotransferase from Leptospira borgpetersenii serovar Hardjo-bovis (strain JB197).